We begin with the raw amino-acid sequence, 426 residues long: D-tagatose-1,6-bisphosphate aldolase subunit KbaZ (426 aa).

Belongs to the GatZ/KbaZ family. KbaZ subfamily. In terms of assembly, forms a complex with KbaY.

The protein operates within carbohydrate metabolism; D-tagatose 6-phosphate degradation; D-glyceraldehyde 3-phosphate and glycerone phosphate from D-tagatose 6-phosphate: step 2/2. Component of the tagatose-1,6-bisphosphate aldolase KbaYZ that is required for full activity and stability of the Y subunit. Could have a chaperone-like function for the proper and stable folding of KbaY. When expressed alone, KbaZ does not show any aldolase activity. The protein is D-tagatose-1,6-bisphosphate aldolase subunit KbaZ of Escherichia coli O81 (strain ED1a).